The sequence spans 345 residues: Phosphate acyltransferase (345 aa).

The protein belongs to the PlsX family. As to quaternary structure, homodimer. Probably interacts with PlsY.

It localises to the cytoplasm. It catalyses the reaction a fatty acyl-[ACP] + phosphate = an acyl phosphate + holo-[ACP]. The protein operates within lipid metabolism; phospholipid metabolism. Functionally, catalyzes the reversible formation of acyl-phosphate (acyl-PO(4)) from acyl-[acyl-carrier-protein] (acyl-ACP). This enzyme utilizes acyl-ACP as fatty acyl donor, but not acyl-CoA. The polypeptide is Phosphate acyltransferase (Wolbachia pipientis subsp. Culex pipiens (strain wPip)).